The chain runs to 193 residues: Xanthine phosphoribosyltransferase (193 aa).

Xanthine-binding residues include L20 and T27. 128–132 is a 5-phospho-alpha-D-ribose 1-diphosphate binding site; it reads ANGQA. Residue K156 participates in xanthine binding.

Belongs to the purine/pyrimidine phosphoribosyltransferase family. Xpt subfamily. In terms of assembly, homodimer.

The protein resides in the cytoplasm. The catalysed reaction is XMP + diphosphate = xanthine + 5-phospho-alpha-D-ribose 1-diphosphate. The protein operates within purine metabolism; XMP biosynthesis via salvage pathway; XMP from xanthine: step 1/1. Converts the preformed base xanthine, a product of nucleic acid breakdown, to xanthosine 5'-monophosphate (XMP), so it can be reused for RNA or DNA synthesis. The protein is Xanthine phosphoribosyltransferase of Streptococcus pyogenes serotype M49 (strain NZ131).